Here is an 80-residue protein sequence, read N- to C-terminus: MKTTILILLILGLGINAKSLEERKSEEEKVFHLLGKIIHHVGNFVYGFSHVFGDDQQDNGKFYGHYAEDNGKHWYDTGDQ.

A signal peptide spans 1 to 19; sequence MKTTILILLILGLGINAKS. The propeptide occupies 20 to 29; it reads LEERKSEEEK. Position 52 is a phenylalanine amide (phenylalanine 52). The propeptide occupies 54-80; sequence DDQQDNGKFYGHYAEDNGKHWYDTGDQ.

As to expression, hemocytes and pharyngeal tissues.

The protein resides in the secreted. In terms of biological role, has antimicrobial activity against E.coli, L.monocytogenes and C.albicans. The protein is Clavanin-C of Styela clava (Sea squirt).